A 609-amino-acid chain; its full sequence is Alpha-glycerophosphate oxidase (609 aa).

FAD is bound at residue 21 to 49 (DVLIIGGGITGAGVAVQTAAAGMKTVLLE).

It depends on FAD as a cofactor.

It is found in the cytoplasm. The enzyme catalyses sn-glycerol 3-phosphate + O2 = dihydroxyacetone phosphate + H2O2. Its pathway is membrane lipid metabolism; glycerophospholipid metabolism. This chain is Alpha-glycerophosphate oxidase (glpO), found in Enterococcus casseliflavus (Enterococcus flavescens).